A 351-amino-acid polypeptide reads, in one-letter code: Biotin synthase (351 aa).

In terms of domain architecture, Radical SAM core spans 42-269 (NEVQVSTLLS…KSHVRLSAGR (228 aa)). [4Fe-4S] cluster-binding residues include Cys57, Cys61, and Cys64. [2Fe-2S] cluster contacts are provided by Cys101, Cys132, Cys192, and Arg264.

The protein belongs to the radical SAM superfamily. Biotin synthase family. As to quaternary structure, homodimer. [4Fe-4S] cluster is required as a cofactor. [2Fe-2S] cluster serves as cofactor.

It catalyses the reaction (4R,5S)-dethiobiotin + (sulfur carrier)-SH + 2 reduced [2Fe-2S]-[ferredoxin] + 2 S-adenosyl-L-methionine = (sulfur carrier)-H + biotin + 2 5'-deoxyadenosine + 2 L-methionine + 2 oxidized [2Fe-2S]-[ferredoxin]. Its pathway is cofactor biosynthesis; biotin biosynthesis; biotin from 7,8-diaminononanoate: step 2/2. Catalyzes the conversion of dethiobiotin (DTB) to biotin by the insertion of a sulfur atom into dethiobiotin via a radical-based mechanism. In Psychromonas ingrahamii (strain DSM 17664 / CCUG 51855 / 37), this protein is Biotin synthase.